The chain runs to 149 residues: Myosin light chain 1 (149 aa).

EF-hand domains follow at residues 2-37 (SATR…IGYN), 81-116 (AKTE…LGEK), and 117-149 (LTDA…VLRQ). 5 residues coordinate Ca(2+): aspartate 15, aspartate 94, threonine 98, lysine 100, and aspartate 105. Residue lysine 116 forms a Glycyl lysine isopeptide (Lys-Gly) (interchain with G-Cter in ubiquitin) linkage. Aspartate 123, lysine 127, and aspartate 132 together coordinate Ca(2+).

Interacts with MYO1, MYO2 and IQG1 by binding to their IQ domains. Interacts with SEC4.

The protein resides in the bud neck. It is found in the bud tip. Essential light chain for the class II conventional myosin MYO1. Also acts as light chain for the class V unconventional myosin MYO2 and for IQG1. Involved in the assembly of the contractile actomyosin ring at the bud neck during cytokinesis by recruiting IQG1 to the bud neck. Also required for chitin and MYO2-dependent secretory vesicle deposition to the center of the bud neck for septum formation. May stabilize MYO2 by binding to its IQ domains. Its major function is probably not to regulate MYO1 activity, but rather to coordinate actin ring formation and targeted membrane deposition during cytokinesis via its interactions with MYO1, IQG1 and MYO2. In Saccharomyces cerevisiae (strain ATCC 204508 / S288c) (Baker's yeast), this protein is Myosin light chain 1 (MLC1).